Here is a 47-residue protein sequence, read N- to C-terminus: Protein YpaB (47 aa).

This is Protein YpaB (ypaB) from Escherichia coli (strain K12).